The sequence spans 131 residues: Probable ATP synthase subunit g 1, mitochondrial (131 aa).

The protein belongs to the ATPase g subunit family. In terms of assembly, subunit of the F-type ATPase which has 2 components, CF(1) - the catalytic core - and CF(0) - the membrane proton channel.

Its subcellular location is the mitochondrion membrane. In terms of biological role, mitochondrial membrane ATP synthase (F(1)F(0) ATP synthase or Complex V) produces ATP from ADP in the presence of a proton gradient across the membrane which is generated by electron transport complexes of the respiratory chain. F-type ATPases consist of two structural domains, F(1) - containing the extramembraneous catalytic core, and F(0) - containing the membrane proton channel, linked together by a central stalk and a peripheral stalk. During catalysis, ATP synthesis in the catalytic domain of F(1) is coupled via a rotary mechanism of the central stalk subunits to proton translocation. Part of the complex F(0) domain. Minor subunit located with subunit a in the membrane. The sequence is that of Probable ATP synthase subunit g 1, mitochondrial from Caenorhabditis elegans.